Here is a 227-residue protein sequence, read N- to C-terminus: Cytochrome c oxidase subunit 2 (227 aa).

The Mitochondrial intermembrane segment spans residues M1 to S14. A helical membrane pass occupies residues P15 to M45. Topologically, residues L46–Q59 are mitochondrial matrix. Residues E60–M87 form a helical membrane-spanning segment. Residues D88–V227 lie on the Mitochondrial intermembrane side of the membrane. Residues H161, C196, E198, C200, H204, and M207 each contribute to the Cu cation site. E198 lines the Mg(2+) pocket. A Phosphotyrosine modification is found at Y218.

This sequence belongs to the cytochrome c oxidase subunit 2 family. Component of the cytochrome c oxidase (complex IV, CIV), a multisubunit enzyme composed of 14 subunits. The complex is composed of a catalytic core of 3 subunits MT-CO1, MT-CO2 and MT-CO3, encoded in the mitochondrial DNA, and 11 supernumerary subunits COX4I, COX5A, COX5B, COX6A, COX6B, COX6C, COX7A, COX7B, COX7C, COX8 and NDUFA4, which are encoded in the nuclear genome. The complex exists as a monomer or a dimer and forms supercomplexes (SCs) in the inner mitochondrial membrane with NADH-ubiquinone oxidoreductase (complex I, CI) and ubiquinol-cytochrome c oxidoreductase (cytochrome b-c1 complex, complex III, CIII), resulting in different assemblies (supercomplex SCI(1)III(2)IV(1) and megacomplex MCI(2)III(2)IV(2)). Found in a complex with TMEM177, COA6, COX18, COX20, SCO1 and SCO2. Interacts with TMEM177 in a COX20-dependent manner. Interacts with COX20. Interacts with COX16. Cu cation is required as a cofactor.

It is found in the mitochondrion inner membrane. It carries out the reaction 4 Fe(II)-[cytochrome c] + O2 + 8 H(+)(in) = 4 Fe(III)-[cytochrome c] + 2 H2O + 4 H(+)(out). Functionally, component of the cytochrome c oxidase, the last enzyme in the mitochondrial electron transport chain which drives oxidative phosphorylation. The respiratory chain contains 3 multisubunit complexes succinate dehydrogenase (complex II, CII), ubiquinol-cytochrome c oxidoreductase (cytochrome b-c1 complex, complex III, CIII) and cytochrome c oxidase (complex IV, CIV), that cooperate to transfer electrons derived from NADH and succinate to molecular oxygen, creating an electrochemical gradient over the inner membrane that drives transmembrane transport and the ATP synthase. Cytochrome c oxidase is the component of the respiratory chain that catalyzes the reduction of oxygen to water. Electrons originating from reduced cytochrome c in the intermembrane space (IMS) are transferred via the dinuclear copper A center (CU(A)) of subunit 2 and heme A of subunit 1 to the active site in subunit 1, a binuclear center (BNC) formed by heme A3 and copper B (CU(B)). The BNC reduces molecular oxygen to 2 water molecules using 4 electrons from cytochrome c in the IMS and 4 protons from the mitochondrial matrix. The protein is Cytochrome c oxidase subunit 2 (MT-CO2) of Vulpes macrotis (Kit fox).